The sequence spans 140 residues: Transmembrane protein 107 (140 aa).

Transmembrane regions (helical) follow at residues 7–27 (LVPS…TLFW) and 53–73 (LVAA…GFLS). The N-linked (GlcNAc...) asparagine glycan is linked to asparagine 79. Helical transmembrane passes span 83-103 (SLLS…FIFE) and 113-133 (IFAF…IAVF).

Part of the tectonic-like complex (also named B9 complex). Interacts with TMEM237, TMEM231, MKS1 and TMEM216.

The protein resides in the membrane. It localises to the cell projection. The protein localises to the cilium. In terms of biological role, plays a role in cilia formation and embryonic patterning. Requires for normal Sonic hedgehog (Shh) signaling in the neural tube and acts in combination with GLI2 and GLI3 to pattern ventral and intermediate neuronal cell types. During ciliogenesis regulates the ciliary transition zone localization of some MKS complex proteins. This is Transmembrane protein 107 from Rattus norvegicus (Rat).